The sequence spans 224 residues: Peptidyl-prolyl cis-trans isomerase FKBP3 (224 aa).

A2 carries the post-translational modification N-acetylalanine. The residue at position 36 (S36) is a Phosphoserine. Basic and acidic residues predominate over residues 89–102; the sequence is KLNEDKPKETKSEE. Positions 89–113 are disordered; it reads KLNEDKPKETKSEETLDEGPPKYTK. K99 carries the post-translational modification N6-acetyllysine. Residues 128-224 form the PPIase FKBP-type domain; the sequence is GDVVHCWYTG…IFEVELVDID (97 aa). A Phosphoserine modification is found at S152. N6-acetyllysine is present on K170.

This sequence belongs to the FKBP-type PPIase family.

The protein resides in the nucleus. The catalysed reaction is [protein]-peptidylproline (omega=180) = [protein]-peptidylproline (omega=0). With respect to regulation, inhibited preferentially by rapamycin over FK506. FK506- and rapamycin-binding proteins (FKBPs) constitute a family of receptors for the two immunosuppressants which inhibit T-cell proliferation by arresting two dinstinct cytoplasmic signal transmission pathways. PPIases accelerate the folding of proteins. In Bos taurus (Bovine), this protein is Peptidyl-prolyl cis-trans isomerase FKBP3 (FKBP3).